A 253-amino-acid polypeptide reads, in one-letter code: Light-harvesting complex stress-related protein 1, chloroplastic (253 aa).

The transit peptide at 1–39 (MAMMMRKAAAVPASSRRSVAVNSVSGKRTVSGKAGAPVP) directs the protein to the chloroplast. Tyr-45 is a binding site for chlorophyll b. Chlorophyll a-binding residues include Phe-60, Glu-81, and His-84. Chlorophyll b is bound at residue Arg-86. Residues 87–107 (VAMLAALGFIVGEQLQDFPLF) form a helical membrane-spanning segment. Residue Gln-124 coordinates chlorophyll a. A helical transmembrane segment spans residues 131-151 (EPLLIAIGVAESYRVAVGWAT). Chlorophyll b contacts are provided by Glu-141 and Arg-144. Residues Lys-190, Glu-191, Asn-194, Arg-196, and Gln-208 each contribute to the chlorophyll a site. Residues 197-217 (LAMIAIAAFVAQELVEQTEIF) form a helical membrane-spanning segment.

This sequence belongs to the light-harvesting chlorophyll a/b-binding (LHC) protein family.

It is found in the plastid. The protein resides in the chloroplast thylakoid membrane. Its function is as follows. Required for non-photochemical quenching (NPQ), a mechanism that converts and dissipates the harmful excess absorbed light energy into heat and protect the photosynthetic apparatus from photo-oxidative damage. Is able to sense luminal acidification of the thylakoid membranes, which occurs along with elevated electron flow caused by excess light, and to induce a large, fast, and reversible pH-dependent quenching in LHCII-containing membranes. Mediates excitation energy transfer from light-harvesting complex II (LHCII) to photosystem I (PSI), rather than photosystem II (PSII), at low pH, which mimics the acidified lumen of the thylakoid membranes in high light-exposed chloroplasts. Activates PSI-dependent fluorescence quenching in addition to dissipating excitation energy in LHCII to avoid photooxidative stress under excess light. This Chlamydomonas reinhardtii (Chlamydomonas smithii) protein is Light-harvesting complex stress-related protein 1, chloroplastic.